Here is a 312-residue protein sequence, read N- to C-terminus: Aspartate carbamoyltransferase catalytic subunit (312 aa).

The carbamoyl phosphate site is built by arginine 55 and threonine 56. Position 83 (lysine 83) interacts with L-aspartate. 3 residues coordinate carbamoyl phosphate: arginine 105, histidine 133, and glutamine 136. Residues arginine 166 and arginine 220 each contribute to the L-aspartate site. Carbamoyl phosphate-binding residues include glycine 261 and proline 262.

The protein belongs to the aspartate/ornithine carbamoyltransferase superfamily. ATCase family. As to quaternary structure, heterododecamer (2C3:3R2) of six catalytic PyrB chains organized as two trimers (C3), and six regulatory PyrI chains organized as three dimers (R2).

It carries out the reaction carbamoyl phosphate + L-aspartate = N-carbamoyl-L-aspartate + phosphate + H(+). The protein operates within pyrimidine metabolism; UMP biosynthesis via de novo pathway; (S)-dihydroorotate from bicarbonate: step 2/3. Functionally, catalyzes the condensation of carbamoyl phosphate and aspartate to form carbamoyl aspartate and inorganic phosphate, the committed step in the de novo pyrimidine nucleotide biosynthesis pathway. The polypeptide is Aspartate carbamoyltransferase catalytic subunit (Prosthecochloris aestuarii (strain DSM 271 / SK 413)).